Consider the following 302-residue polypeptide: Oxygen-dependent coproporphyrinogen-III oxidase (302 aa).

Substrate is bound at residue S94. A divalent metal cation-binding residues include H98 and H108. The active-site Proton donor is H108. Substrate is bound at residue 110–112 (NVR). The a divalent metal cation site is built by H147 and H177. The segment at 242-277 (YVEFNLVYDRGTLFGLQTGGRTESILMSMPPLVRWQ) is important for dimerization. 260–262 (GGR) serves as a coordination point for substrate.

It belongs to the aerobic coproporphyrinogen-III oxidase family. Homodimer. A divalent metal cation is required as a cofactor.

It is found in the cytoplasm. It catalyses the reaction coproporphyrinogen III + O2 + 2 H(+) = protoporphyrinogen IX + 2 CO2 + 2 H2O. The protein operates within porphyrin-containing compound metabolism; protoporphyrin-IX biosynthesis; protoporphyrinogen-IX from coproporphyrinogen-III (O2 route): step 1/1. Its function is as follows. Involved in the heme biosynthesis. Catalyzes the aerobic oxidative decarboxylation of propionate groups of rings A and B of coproporphyrinogen-III to yield the vinyl groups in protoporphyrinogen-IX. This is Oxygen-dependent coproporphyrinogen-III oxidase from Shewanella putrefaciens (strain CN-32 / ATCC BAA-453).